Here is a 296-residue protein sequence, read N- to C-terminus: Cytidine deaminase (296 aa).

2 CMP/dCMP-type deaminase domains span residues 48–168 (DADA…FGPV) and 187–296 (QNMN…FIEE). 89 to 91 (NME) is a substrate binding site. His-102 contributes to the Zn(2+) binding site. Glu-104 (proton donor) is an active-site residue. Zn(2+) contacts are provided by Cys-129 and Cys-132.

Belongs to the cytidine and deoxycytidylate deaminase family. In terms of assembly, homodimer. It depends on Zn(2+) as a cofactor.

It carries out the reaction cytidine + H2O + H(+) = uridine + NH4(+). The catalysed reaction is 2'-deoxycytidine + H2O + H(+) = 2'-deoxyuridine + NH4(+). Its function is as follows. This enzyme scavenges exogenous and endogenous cytidine and 2'-deoxycytidine for UMP synthesis. In Pectobacterium carotovorum subsp. carotovorum (strain PC1), this protein is Cytidine deaminase.